The following is a 621-amino-acid chain: KIF-binding protein (621 aa).

Positions 51–75 (GPAPEDEDERPEAEDGPGAGDHALG) are disordered. Residues 54 to 65 (PEDEDERPEAED) show a composition bias toward acidic residues. Serine 178 bears the Phosphoserine mark.

This sequence belongs to the KIF-binding protein family. Interacts with KIF1B; positively regulates KIF1B microtubule motor activity. Interacts with STMN2. In terms of tissue distribution, highly expressed in heart, brain, ovary, testis, spinal cord and all specific brain regions examined. Moderate expressed at intermediate level in all other adult tissues examined, as well as in fetal liver and brain. Not expressed in blood leukocytes.

It localises to the cytoplasm. Its subcellular location is the cytoskeleton. Its function is as follows. Activator of KIF1B plus-end-directed microtubule motor activity. Required for organization of axonal microtubules, and axonal outgrowth and maintenance during peripheral and central nervous system development. The sequence is that of KIF-binding protein from Homo sapiens (Human).